The primary structure comprises 115 residues: Tail tip protein M (115 aa).

It belongs to the lambda-like tail tip protein M family.

Its subcellular location is the virion. The protein resides in the host cytoplasm. In terms of biological role, part of the distal tail tip which plays a role in DNA ejection during entry, and in tail assembly initiation during exit. May bind tail tip complex associated with tape measure protein and allow tail tube protein polymerization on top of tail tip. In Escherichia coli (Bacteriophage N15), this protein is Tail tip protein M.